The primary structure comprises 634 residues: 1-deoxy-D-xylulose-5-phosphate synthase (634 aa).

Residues H74 and 115-117 (AHS) each bind thiamine diphosphate. D146 contacts Mg(2+). Residues 147-148 (GA), N176, Y283, and E365 each bind thiamine diphosphate. N176 lines the Mg(2+) pocket.

The protein belongs to the transketolase family. DXPS subfamily. In terms of assembly, homodimer. Mg(2+) serves as cofactor. It depends on thiamine diphosphate as a cofactor.

It catalyses the reaction D-glyceraldehyde 3-phosphate + pyruvate + H(+) = 1-deoxy-D-xylulose 5-phosphate + CO2. It functions in the pathway metabolic intermediate biosynthesis; 1-deoxy-D-xylulose 5-phosphate biosynthesis; 1-deoxy-D-xylulose 5-phosphate from D-glyceraldehyde 3-phosphate and pyruvate: step 1/1. Catalyzes the acyloin condensation reaction between C atoms 2 and 3 of pyruvate and glyceraldehyde 3-phosphate to yield 1-deoxy-D-xylulose-5-phosphate (DXP). The sequence is that of 1-deoxy-D-xylulose-5-phosphate synthase from Burkholderia orbicola (strain MC0-3).